Here is a 42-residue protein sequence, read N- to C-terminus: Cytochrome b559 subunit beta (42 aa).

A helical membrane pass occupies residues 17-33 (WLTIHALAVPTVFFLGA). His21 lines the heme pocket.

Belongs to the PsbE/PsbF family. As to quaternary structure, heterodimer of an alpha subunit and a beta subunit. PSII is composed of 1 copy each of membrane proteins PsbA, PsbB, PsbC, PsbD, PsbE, PsbF, PsbH, PsbI, PsbJ, PsbK, PsbL, PsbM, PsbT, PsbX, PsbY, PsbZ, Psb30/Ycf12, at least 3 peripheral proteins of the oxygen-evolving complex and a large number of cofactors. It forms dimeric complexes. Heme b is required as a cofactor.

The protein resides in the plastid. The protein localises to the chloroplast thylakoid membrane. This b-type cytochrome is tightly associated with the reaction center of photosystem II (PSII). PSII is a light-driven water:plastoquinone oxidoreductase that uses light energy to abstract electrons from H(2)O, generating O(2) and a proton gradient subsequently used for ATP formation. It consists of a core antenna complex that captures photons, and an electron transfer chain that converts photonic excitation into a charge separation. In Emiliania huxleyi (Coccolithophore), this protein is Cytochrome b559 subunit beta.